We begin with the raw amino-acid sequence, 509 residues long: Putative thymidine phosphorylase (509 aa).

Belongs to the thymidine/pyrimidine-nucleoside phosphorylase family. Type 2 subfamily.

The catalysed reaction is thymidine + phosphate = 2-deoxy-alpha-D-ribose 1-phosphate + thymine. This Chelativorans sp. (strain BNC1) protein is Putative thymidine phosphorylase.